A 238-amino-acid polypeptide reads, in one-letter code: Probable transglycosylase IsaA (238 aa).

The N-terminal stretch at 1–29 is a signal peptide; the sequence is MKKTVIASSLAVALGVTGYALTTDNSAHA. Residues 115-157 are disordered; it reads ASTQSVSSNQQSSNTNVEAVSAPKTTSYSASTSSSSSASTGGS. Low complexity-rich tracts occupy residues 116–131 and 139–157; these read STQS…NTNV and TTSY…TGGS.

It belongs to the transglycosylase family. IsaA subfamily.

Its subcellular location is the secreted. In terms of biological role, is able to cleave peptidoglycan. The chain is Probable transglycosylase IsaA (isaA) from Staphylococcus haemolyticus (strain JCSC1435).